Consider the following 278-residue polypeptide: Thioredoxin-related transmembrane protein 1 (278 aa).

Positions 1–26 are cleaved as a signal peptide; that stretch reads MAPSGSLRIPVAVLLLLLWGAPWAHG. Residues 27-132 form the Thioredoxin domain; sequence KRSDVRIITD…FINFISDKEW (106 aa). The Extracellular portion of the chain corresponds to 27–180; that stretch reads KRSDVRIITD…EDLGLPIWGS (154 aa). Catalysis depends on nucleophile residues cysteine 56 and cysteine 59. Residues cysteine 56 and cysteine 59 are joined by a disulfide bond. A helical membrane pass occupies residues 181–203; the sequence is YTVFALATLLSGLLLGLFMIFVA. At 204 to 278 the chain is on the cytoplasmic side; it reads DCLCPSKRRR…VGPSLATDKS (75 aa). Residues cysteine 205 and cysteine 207 are each lipidated (S-palmitoyl cysteine). The disordered stretch occupies residues 213-278; sequence RPQPYPSRKL…VGPSLATDKS (66 aa). Serine 226, serine 245, serine 268, serine 272, and serine 278 each carry phosphoserine. Residues 235-250 show a composition bias toward acidic residues; that stretch reads EEQEADVEDVSEEESE.

As to quaternary structure, interacts with ATP2A2. Palmitoylated; palmitoylation is required for localization to mitochondria-associated endoplasmic reticulum membrane (MAM).

The protein localises to the endoplasmic reticulum membrane. The protein resides in the mitochondrion membrane. Its subcellular location is the secreted. The catalysed reaction is Catalyzes the rearrangement of -S-S- bonds in proteins.. Functionally, thiredoxin domain-containing protein that participates in various redox reactions through the reversible oxidation of its active center dithiol to a disulfide and catalyze dithiol-disulfide exchange reactions. Acts as a key inhibitor of the alternative triglyceride biosynthesis pathway by inhibiting the activity of TMEM68/DIESL at the endoplasmic reticulum, thereby restricting accumulation of triacylglycerol. The alternative triglyceride biosynthesis pathway mediates formation of triacylglycerol from diacylglycerol and membrane phospholipids. Acts as a protein disulfide isomerase by catalyzing formation or reduction of disulfide bonds. Specifically mediates formation of disulfide bonds of transmembrane proteins at the endoplasmic reticulum membrane. Involved in endoplasmic reticulum-associated degradation (ERAD) via its protein disulfide isomerase activity by acting on folding-defective polypeptides at the endoplasmic reticulum membrane. Acts as a negative regulator of platelet aggregation following secretion in the extracellular space. Acts as a regulator of endoplasmic reticulum-mitochondria contact sites via its ability to regulate redox signals. Regulates endoplasmic reticulum-mitochondria Ca(2+) flux. The chain is Thioredoxin-related transmembrane protein 1 (TMX1) from Bos taurus (Bovine).